The sequence spans 270 residues: 3-phenylpropionate-dihydrodiol/cinnamic acid-dihydrodiol dehydrogenase (270 aa).

Position 10 to 34 (F10 to A34) interacts with NAD(+). Residue S143 participates in substrate binding. The active-site Proton acceptor is the Y156.

This sequence belongs to the short-chain dehydrogenases/reductases (SDR) family.

The catalysed reaction is 3-(cis-5,6-dihydroxycyclohexa-1,3-dien-1-yl)propanoate + NAD(+) = 3-(2,3-dihydroxyphenyl)propanoate + NADH + H(+). It catalyses the reaction (2E)-3-(cis-5,6-dihydroxycyclohexa-1,3-dien-1-yl)prop-2-enoate + NAD(+) = (2E)-3-(2,3-dihydroxyphenyl)prop-2-enoate + NADH + H(+). It participates in aromatic compound metabolism; 3-phenylpropanoate degradation. In terms of biological role, converts 3-phenylpropionate-dihydrodiol (PP-dihydrodiol) and cinnamic acid-dihydrodiol (CI-dihydrodiol) into 3-(2,3-dihydroxylphenyl)propanoic acid (DHPP) and 2,3-dihydroxicinnamic acid (DHCI), respectively. This is 3-phenylpropionate-dihydrodiol/cinnamic acid-dihydrodiol dehydrogenase from Shigella flexneri serotype 5b (strain 8401).